The primary structure comprises 279 residues: Movement protein (279 aa).

Positions 246–279 are disordered; the sequence is SESEELNVESPPAAIGSSSASRSEAFRPQVVNGL. Residues 254–268 are compositionally biased toward low complexity; that stretch reads ESPPAAIGSSSASRS.

It belongs to the cucumovirus movement protein family.

It localises to the host cell junction. The protein localises to the host plasmodesma. Its function is as follows. Transports viral genome to neighboring plant cells directly through plasmosdesmata, without any budding. The movement protein allows efficient cell to cell propagation, by bypassing the host cell wall barrier. Acts by forming a tubular structure at the host plasmodesmata, enlarging it enough to allow free passage of virion capsids. In Cucumis sativus (Cucumber), this protein is Movement protein.